The sequence spans 513 residues: 2,3-bisphosphoglycerate-independent phosphoglycerate mutase (513 aa).

Mn(2+)-binding residues include aspartate 15 and serine 65. Serine 65 (phosphoserine intermediate) is an active-site residue. Substrate is bound by residues histidine 126, 156–157 (RD), arginine 188, arginine 194, 263–266 (RADR), and lysine 337. Aspartate 402, histidine 406, aspartate 443, histidine 444, and histidine 461 together coordinate Mn(2+).

It belongs to the BPG-independent phosphoglycerate mutase family. Monomer. Mn(2+) serves as cofactor.

It catalyses the reaction (2R)-2-phosphoglycerate = (2R)-3-phosphoglycerate. The protein operates within carbohydrate degradation; glycolysis; pyruvate from D-glyceraldehyde 3-phosphate: step 3/5. Its function is as follows. Catalyzes the interconversion of 2-phosphoglycerate and 3-phosphoglycerate. This chain is 2,3-bisphosphoglycerate-independent phosphoglycerate mutase, found in Moorella thermoacetica (strain ATCC 39073 / JCM 9320).